Here is a 144-residue protein sequence, read N- to C-terminus: 3-dehydroquinate dehydratase (144 aa).

Y24 serves as the catalytic Proton acceptor. Substrate-binding residues include N73, H79, and D86. The active-site Proton donor is H99. Substrate-binding positions include 100 to 101 (LS) and R110.

This sequence belongs to the type-II 3-dehydroquinase family. Homododecamer.

The catalysed reaction is 3-dehydroquinate = 3-dehydroshikimate + H2O. Its pathway is metabolic intermediate biosynthesis; chorismate biosynthesis; chorismate from D-erythrose 4-phosphate and phosphoenolpyruvate: step 3/7. Catalyzes a trans-dehydration via an enolate intermediate. The protein is 3-dehydroquinate dehydratase of Shewanella sp. (strain ANA-3).